Consider the following 666-residue polypeptide: Peptidase S41 family protein phomP1 (666 aa).

The N-terminal stretch at 1-27 (MSSFLVQTAVVRLFLLGVVFWFPFALS) is a signal peptide. Residues asparagine 70, asparagine 214, and asparagine 234 are each glycosylated (N-linked (GlcNAc...) asparagine). Positions 303–504 (DVAVLQITSF…LLQAQGVRTV (202 aa)) are peptidase S41 domain. Asparagine 555 and asparagine 612 each carry an N-linked (GlcNAc...) asparagine glycan.

The protein belongs to the peptidase S41A family.

It participates in mycotoxin biosynthesis. Its function is as follows. Peptidase S41 family protein; part of the gene cluster that mediates the biosynthesis of the phomopsins, a group of hexapeptide mycotoxins which infects lupins and causes lupinosis disease in livestock. Within the pathway, phomP1 and phomP1' are probably involved in the processing of the phomA and phomA' precursors. The pathway starts with the processing of the precursor phomA by several endopeptidases including kexin proteases as well as the cluster-specific S41 family peptidase phomP1 and the oligopeptidase phomG to produce 10 identical copies of the hexapeptide Tyr-Val-Ile-Pro-Ile-Asp. After being excised from the precursor peptide, the core peptides are cyclized and modified post-translationally by enzymes encoded within the gene cluster. The timing and order of proteolysis of the phomA precursor and PTMs are still unknown. Two tyrosinase-like enzymes, phomQ1 and phomQ2, catalyze the chlorination and hydroxylation of Tyr, respectively. PhomYb, is proposed to be involved in the construction of the macrocyclic structure. The other 4 ustYa family proteins may be involved in PTMs that generate the unique structure of phomopsin A. PhomYa is required for the hydroxylation of C-beta of Tyr. PhomYc, phomYd, and phomYe are responsible for the biosynthesis of 2,3-dehydroisoleucine (dIle), 2,3-dehydroaspartic acid (dAsp), and 3,4-dehydroproline (dPro), respectively. While dIle formation by phomYc is indispensable for the installation of dAsp by phomYd, the order of the other PTMs have not been elucidated yet. Most of the biosynthetic enzymes likely have broad substrate specificity, and thus, there might be a metabolic grid from a precursor to phomopsin A. The enzyme(s) responsible for the biosynthesis of 3,4-dehydrovaline (dVal) have also not been identified yet. Finally, phomM acts as an S-adenosylmethionine-dependent alpha-N-methyltransferase that catalyzes two successive N-methylation reactions, converting N-desmethyl-phomopsin A to phomopsin A and phomopsin A further to an N,N-dimethylated congener called phomopsin E. The chain is Peptidase S41 family protein phomP1 from Diaporthe leptostromiformis (Lupinosis disease fungus).